A 341-amino-acid polypeptide reads, in one-letter code: MAVSVTPIRDTKWLTLEVCREFQRGTCSRPDTECKFAHPSKSCQVENGRVIACFDSLKGRCSRENCKYLHPPPHLKTQLEINGRNNLIQQKNMAMLAQQMQLANAMMPGAPLQPVPMFSVAPSLATSASAAFNPYLGPVSPSLVPAEILPTAPMLVTGNPGVPVPAAAAAAAQKLMRTDRLEVCREYQRGNCNRGENDCRFAHPADSTMIDTNDNTVTVCMDYIKGRCSREKCKYFHPPAHLQAKIKAAQYQVNQAAAAQAAATAAAMGIPQAVLPPLPKRPALEKTNGATAVFNTGIFQYQQALANMQLQQHTAFLPPGSILCMTPATSVDTHNICRTSD.

Position 6 is a phosphothreonine (Thr6). 4 C3H1-type zinc fingers span residues 13 to 41, 47 to 73, 178 to 206, and 214 to 240; these read WLTL…HPSK, NGRV…HPPP, TDRL…HPAD, and DNTV…HPPA.

It belongs to the muscleblind family. In terms of assembly, interacts with DDX1 and YBX1. Interacts with HNRNPH1; the interaction in RNA-independent. Interacts with RBPMS; the interaction allows cooperative assembly of RNA-bound stable cell-specific alternative splicing regulatory complexes. Highly expressed in cardiac and skeletal muscle. Weakly expressed in heart and eye (at protein level).

It is found in the nucleus. The protein localises to the cytoplasm. The protein resides in the cytoplasmic granule. Mediates pre-mRNA alternative splicing regulation. Acts either as activator or repressor of splicing on specific pre-mRNA targets. Inhibits cardiac troponin-T (TNNT2) pre-mRNA exon inclusion but induces insulin receptor (IR) pre-mRNA exon inclusion in muscle. Antagonizes the alternative splicing activity pattern of CELF proteins. Regulates the TNNT2 exon 5 skipping through competition with U2AF2. Inhibits the formation of the spliceosome A complex on intron 4 of TNNT2 pre-mRNA. Binds to the stem-loop structure within the polypyrimidine tract of TNNT2 intron 4 during spliceosome assembly. Binds to the 5'-YGCU(U/G)Y-3'consensus sequence. Binds to the IR RNA. Binds to CUG triplet repeat expansion in myotonic dystrophy muscle cells by sequestering the target RNAs. Together with RNA binding proteins RBPMS and RBFOX2, activates vascular smooth muscle cells alternative splicing events. Regulates NCOR2 alternative splicing. The chain is Muscleblind-like protein 1 (Mbnl1) from Mus musculus (Mouse).